A 96-amino-acid chain; its full sequence is NADH-ubiquinone oxidoreductase chain 4L (96 aa).

A run of 3 helical transmembrane segments spans residues 2–22 (IMFL…FCFV), 28–48 (LLSM…MLFI), and 62–82 (MFLT…VSMI).

This sequence belongs to the complex I subunit 4L family.

The protein resides in the mitochondrion membrane. The catalysed reaction is a ubiquinone + NADH + 5 H(+)(in) = a ubiquinol + NAD(+) + 4 H(+)(out). In terms of biological role, core subunit of the mitochondrial membrane respiratory chain NADH dehydrogenase (Complex I) that is believed to belong to the minimal assembly required for catalysis. Complex I functions in the transfer of electrons from NADH to the respiratory chain. The immediate electron acceptor for the enzyme is believed to be ubiquinone. The protein is NADH-ubiquinone oxidoreductase chain 4L (mt:ND4L) of Drosophila nasuta F (Fruit fly).